Here is a 56-residue protein sequence, read N- to C-terminus: Cruciferin (56 aa).

At Thr-45 the chain carries Phosphothreonine.

Belongs to the 11S seed storage protein (globulins) family. In terms of assembly, hexamer; each subunit is composed of an acidic and a basic chain derived from a single precursor and linked by a disulfide bond.

Functionally, this is a seed storage protein. The polypeptide is Cruciferin (Sinapis alba (White mustard)).